We begin with the raw amino-acid sequence, 400 residues long: tRNA-specific 2-thiouridylase MnmA (400 aa).

ATP contacts are provided by residues A19–S26 and L45. C113 (nucleophile) is an active-site residue. A disulfide bridge links C113 with C210. Residue G137 participates in ATP binding. An interaction with tRNA region spans residues R160–Q162. Catalysis depends on C210, which acts as the Cysteine persulfide intermediate.

It belongs to the MnmA/TRMU family.

Its subcellular location is the cytoplasm. It catalyses the reaction S-sulfanyl-L-cysteinyl-[protein] + uridine(34) in tRNA + AH2 + ATP = 2-thiouridine(34) in tRNA + L-cysteinyl-[protein] + A + AMP + diphosphate + H(+). In terms of biological role, catalyzes the 2-thiolation of uridine at the wobble position (U34) of tRNA, leading to the formation of s(2)U34. This is tRNA-specific 2-thiouridylase MnmA from Nitrobacter winogradskyi (strain ATCC 25391 / DSM 10237 / CIP 104748 / NCIMB 11846 / Nb-255).